The sequence spans 314 residues: Acetyl-coenzyme A carboxylase carboxyl transferase subunit alpha (314 aa).

One can recognise a CoA carboxyltransferase C-terminal domain in the interval 32–289 (EIDMLEASLE…KSAFVAQLDS (258 aa)).

It belongs to the AccA family. As to quaternary structure, acetyl-CoA carboxylase is a heterohexamer composed of biotin carboxyl carrier protein (AccB), biotin carboxylase (AccC) and two subunits each of ACCase subunit alpha (AccA) and ACCase subunit beta (AccD).

Its subcellular location is the cytoplasm. The catalysed reaction is N(6)-carboxybiotinyl-L-lysyl-[protein] + acetyl-CoA = N(6)-biotinyl-L-lysyl-[protein] + malonyl-CoA. It functions in the pathway lipid metabolism; malonyl-CoA biosynthesis; malonyl-CoA from acetyl-CoA: step 1/1. Functionally, component of the acetyl coenzyme A carboxylase (ACC) complex. First, biotin carboxylase catalyzes the carboxylation of biotin on its carrier protein (BCCP) and then the CO(2) group is transferred by the carboxyltransferase to acetyl-CoA to form malonyl-CoA. The sequence is that of Acetyl-coenzyme A carboxylase carboxyl transferase subunit alpha from Staphylococcus aureus (strain NCTC 8325 / PS 47).